Reading from the N-terminus, the 286-residue chain is UPF0173 metal-dependent hydrolase RALTA_A1748 (286 aa).

Belongs to the UPF0173 family.

The chain is UPF0173 metal-dependent hydrolase RALTA_A1748 from Cupriavidus taiwanensis (strain DSM 17343 / BCRC 17206 / CCUG 44338 / CIP 107171 / LMG 19424 / R1) (Ralstonia taiwanensis (strain LMG 19424)).